The sequence spans 488 residues: L-arabinose isomerase 2 (488 aa).

Mn(2+) contacts are provided by Glu-306, Glu-331, His-348, and His-447.

The protein belongs to the arabinose isomerase family. The cofactor is Mn(2+).

It carries out the reaction beta-L-arabinopyranose = L-ribulose. It participates in carbohydrate degradation; L-arabinose degradation via L-ribulose; D-xylulose 5-phosphate from L-arabinose (bacterial route): step 1/3. Catalyzes the conversion of L-arabinose to L-ribulose. The protein is L-arabinose isomerase 2 of Clostridium acetobutylicum (strain ATCC 824 / DSM 792 / JCM 1419 / IAM 19013 / LMG 5710 / NBRC 13948 / NRRL B-527 / VKM B-1787 / 2291 / W).